Here is a 298-residue protein sequence, read N- to C-terminus: Heme A synthase (298 aa).

Residues 1 to 6 (MHRSLK) lie on the Cytoplasmic side of the membrane. Residues 7–27 (IFGTLTSIGMVIVLMQGALVT) traverse the membrane as a helical segment. Topologically, residues 28–62 (KTESGEGCGATWPLCFGEVIPTNPAIETIIEYSHR) are extracellular. A disulfide bond links Cys35 and Cys42. Glu58 is a catalytic residue. His61 serves as a coordination point for heme o. Residues 63–83 (IVSGLLGAMVIILAIWAWRKL) form a helical membrane-spanning segment. Residues 84–92 (SHIRETKVM) lie on the Cytoplasmic side of the membrane. Residues 93 to 113 (AILAVLFIIFQGLLGAGAVVF) form a helical membrane-spanning segment. At 114–117 (GQSH) the chain is on the extracellular side. Residues 118 to 138 (AILALHFGISAISLATVVLLT) form a helical membrane-spanning segment. Heme o is bound at residue His123. The Cytoplasmic portion of the chain corresponds to 139–158 (TLAFEDGKPNPPALIVKKGY). A helical transmembrane segment spans residues 159–179 (KGYILAVFAYCYAVIYTGAYV). Topologically, residues 180–209 (KHTQATLACGDFPLCNGQWIPMLSGPVGAH) are extracellular. A disulfide bridge connects residues Cys188 and Cys194. The chain crosses the membrane as a helical span at residues 210 to 230 (FFHRVAGTLLLILLVVALIWT). His212 lines the heme b pocket. The Cytoplasmic segment spans residues 231–244 (LRKYSHYRSLVWTH). Residues 245 to 265 (ILCVILVLTQYATGISIVLTG) form a helical membrane-spanning segment. The Extracellular segment spans residues 266–271 (NELFVA). The helical transmembrane segment at 272–292 (MMHALIVSILFTTLCYIVMIL) threads the bilayer. Heme b is bound at residue His274. Topologically, residues 293 to 298 (SRNKAV) are cytoplasmic.

This sequence belongs to the COX15/CtaA family. Type 1 subfamily. In terms of assembly, interacts with CtaB. Requires heme b as cofactor.

It is found in the cell membrane. The enzyme catalyses Fe(II)-heme o + 2 A + H2O = Fe(II)-heme a + 2 AH2. It functions in the pathway porphyrin-containing compound metabolism; heme A biosynthesis; heme A from heme O: step 1/1. Functionally, catalyzes the conversion of heme O to heme A by two successive hydroxylations of the methyl group at C8. The first hydroxylation forms heme I, the second hydroxylation results in an unstable dihydroxymethyl group, which spontaneously dehydrates, resulting in the formyl group of heme A. The protein is Heme A synthase of Halalkalibacterium halodurans (strain ATCC BAA-125 / DSM 18197 / FERM 7344 / JCM 9153 / C-125) (Bacillus halodurans).